Here is a 189-residue protein sequence, read N- to C-terminus: MLFSRIIAASAQRKLSVYLKKGGLVAYPTESCYGLGCLPTLAKALGKLAHLKKRPQHKGMIVIGNQLEQLQPLLQMPSENIQTMLRNEWPAPKTFLLLAKSGVLPALRGKRRSKLAVRVPDHTGARRLCQALGMPLVSTSCNRAGKRACRTEREVRRQFGRDVWIVGGRIGRQKSPSQIIDGETGKRLR.

In terms of domain architecture, YrdC-like spans 9 to 189 (ASAQRKLSVY…IDGETGKRLR (181 aa)).

This sequence belongs to the SUA5 family. TsaC subfamily.

The protein resides in the cytoplasm. It carries out the reaction L-threonine + hydrogencarbonate + ATP = L-threonylcarbamoyladenylate + diphosphate + H2O. In terms of biological role, required for the formation of a threonylcarbamoyl group on adenosine at position 37 (t(6)A37) in tRNAs that read codons beginning with adenine. Catalyzes the conversion of L-threonine, HCO(3)(-)/CO(2) and ATP to give threonylcarbamoyl-AMP (TC-AMP) as the acyladenylate intermediate, with the release of diphosphate. The polypeptide is Threonylcarbamoyl-AMP synthase (Neisseria gonorrhoeae (strain ATCC 700825 / FA 1090)).